Consider the following 78-residue polypeptide: DNA-directed RNA polymerase subunit omega (78 aa).

Belongs to the RNA polymerase subunit omega family. In terms of assembly, in cyanobacteria the RNAP catalytic core is composed of 2 alpha, 1 beta, 1 beta', 1 gamma and 1 omega subunit. When a sigma factor is associated with the core the holoenzyme is formed, which can initiate transcription.

The enzyme catalyses RNA(n) + a ribonucleoside 5'-triphosphate = RNA(n+1) + diphosphate. In terms of biological role, promotes RNA polymerase assembly. Latches the N- and C-terminal regions of the beta' subunit thereby facilitating its interaction with the beta and alpha subunits. This chain is DNA-directed RNA polymerase subunit omega, found in Prochlorococcus marinus (strain AS9601).